Here is a 166-residue protein sequence, read N- to C-terminus: SUMO-conjugating enzyme UBC9 (166 aa).

The 154-residue stretch at 4-157 folds into the UBC core domain; the sequence is IAAGRLAEER…VKKEAVKYAA (154 aa). Catalysis depends on Cys93, which acts as the Glycyl thioester intermediate.

It belongs to the ubiquitin-conjugating enzyme family. In terms of assembly, interacts with brd-1 and rad-51. Interacts with smo-1 and sop-2. Interacts with bet-1 (via BROMO domain 2). Interacts with isoforms 1 and 2 of X-box-binding protein xbp-1.

It is found in the nucleus envelope. The protein operates within protein modification; protein sumoylation. Its function is as follows. Accepts the ubiquitin-like protein smo-1 from the aos-1-uba-2 E1 complex and catalyzes its covalent attachment to other proteins with the help of an E3 ligase such as gei-17. Required to sumoylate the ETS transcription factor lin-1, Polycomb protein sop-2, and intermediate filament proteins, such as ifb-1. Required for embryonic development, fertility, vulval morphogenesis, inhibition of vulval cell fates, lifespan, and neuromuscular activity. The protein is SUMO-conjugating enzyme UBC9 of Caenorhabditis elegans.